Here is a 378-residue protein sequence, read N- to C-terminus: MSSFDLPAPSPPRCSPQFPSIGQEPPEMNLYYENFFHPQGVPSPQRPSFEGGGEYGATPNPYLWFNGPTMTPPPYLPGPNASPFLPQAYGVQRPLLPSVSGLGGSDLGWLPIPSQEELMKLVRPPYSYSALIAMAIHGAPDKRLTLSQIYQYVADNFPFYNKSKAGWQNSIRHNLSLNDCFKKVPRDEDDPGKGNYWTLDPNCEKMFDNGNFRRKRKRKSDVSSSTASLALEKTESSLPVDSPKTTEPQDILDGASPGGTTSSPEKRPSPPPSGAPCLNSFLSSMTAYVSGGSPTSHPLVTPGLSPEPSDKTGQNSLTFNSFSPLTNLSNHSGGGDWANPMPTNMLSYGGSVLSQFSPHFYNSVNTSGVLYPREGTEV.

Disordered stretches follow at residues 1 to 26 (MSSFDLPAPSPPRCSPQFPSIGQEPP) and 208 to 278 (DNGN…APCL). The fork-head DNA-binding region spans 123–217 (RPPYSYSALI…DNGNFRRKRK (95 aa)). Positions 236 to 248 (SSLPVDSPKTTEP) are enriched in polar residues.

Expressed in kidney.

It is found in the nucleus. Its function is as follows. Transcriptional activator required for the development of normal hearing, sense of balance and kidney function. Required for the expression of SLC26A4/PDS, JAG1 and COCH in a subset of epithelial cells and the development of the endolymphatic system in the inner ear. Also required for the expression of SLC4A1/AE1, SLC4A9/AE4, ATP6V1B1 and the differentiation of intercalated cells in the epithelium of distal renal tubules. The polypeptide is Forkhead box protein I1 (FOXI1) (Homo sapiens (Human)).